The following is a 366-amino-acid chain: DNA integrity scanning protein DisA (366 aa).

A DAC domain is found at 21 to 159 (VHTLKGTLQR…EGKAHMLEQP (139 aa)). ATP is bound by residues G88, L106, and 119 to 123 (TRHRS).

Belongs to the DisA family. Homooctamer. Mg(2+) is required as a cofactor.

It carries out the reaction 2 ATP = 3',3'-c-di-AMP + 2 diphosphate. Functionally, participates in a DNA-damage check-point. DisA forms globular foci that rapidly scan along the chromosomes searching for lesions. In terms of biological role, also has diadenylate cyclase activity, catalyzing the condensation of 2 ATP molecules into cyclic di-AMP (c-di-AMP). c-di-AMP likely acts as a signaling molecule that may couple DNA integrity with a cellular process. This is DNA integrity scanning protein DisA from Corynebacterium glutamicum (strain R).